Reading from the N-terminus, the 435-residue chain is NADH-quinone oxidoreductase subunit D (435 aa).

Belongs to the complex I 49 kDa subunit family. NDH-1 is composed of 14 different subunits. Subunits NuoB, C, D, E, F, and G constitute the peripheral sector of the complex.

It is found in the cell inner membrane. It carries out the reaction a quinone + NADH + 5 H(+)(in) = a quinol + NAD(+) + 4 H(+)(out). Functionally, NDH-1 shuttles electrons from NADH, via FMN and iron-sulfur (Fe-S) centers, to quinones in the respiratory chain. The immediate electron acceptor for the enzyme in this species is believed to be ubiquinone. Couples the redox reaction to proton translocation (for every two electrons transferred, four hydrogen ions are translocated across the cytoplasmic membrane), and thus conserves the redox energy in a proton gradient. The chain is NADH-quinone oxidoreductase subunit D from Xylella fastidiosa (strain M23).